A 95-amino-acid chain; its full sequence is Small ribosomal subunit protein uS19 (95 aa).

Positions 73–95 are disordered; that stretch reads EFSPTRTYRGHGADKNAKGSKKK.

It belongs to the universal ribosomal protein uS19 family.

Functionally, protein S19 forms a complex with S13 that binds strongly to the 16S ribosomal RNA. The sequence is that of Small ribosomal subunit protein uS19 from Deinococcus geothermalis (strain DSM 11300 / CIP 105573 / AG-3a).